Here is a 514-residue protein sequence, read N- to C-terminus: tRNA-2-methylthio-N(6)-dimethylallyladenosine synthase (514 aa).

Positions 1–21 (MNEEQRKASSVDVLAERDKKA) are disordered. In terms of domain architecture, MTTase N-terminal spans 68-186 (RTFLIKTYGC…LPEILEEAYL (119 aa)). Positions 77, 113, 147, 223, 227, and 230 each coordinate [4Fe-4S] cluster. Residues 209–440 (REGNIKAWVN…KKVGHYSQIA (232 aa)) form the Radical SAM core domain. The TRAM domain maps to 442-505 (SKYEGQTVTV…QYSLNGSFVK (64 aa)).

Belongs to the methylthiotransferase family. MiaB subfamily. In terms of assembly, monomer. The cofactor is [4Fe-4S] cluster.

Its subcellular location is the cytoplasm. It carries out the reaction N(6)-dimethylallyladenosine(37) in tRNA + (sulfur carrier)-SH + AH2 + 2 S-adenosyl-L-methionine = 2-methylsulfanyl-N(6)-dimethylallyladenosine(37) in tRNA + (sulfur carrier)-H + 5'-deoxyadenosine + L-methionine + A + S-adenosyl-L-homocysteine + 2 H(+). Its function is as follows. Catalyzes the methylthiolation of N6-(dimethylallyl)adenosine (i(6)A), leading to the formation of 2-methylthio-N6-(dimethylallyl)adenosine (ms(2)i(6)A) at position 37 in tRNAs that read codons beginning with uridine. The protein is tRNA-2-methylthio-N(6)-dimethylallyladenosine synthase of Staphylococcus aureus (strain N315).